Here is a 274-residue protein sequence, read N- to C-terminus: Large ribosomal subunit protein uL2 (274 aa).

Disordered regions lie at residues 28–54 and 223–265; these read APYA…TRHI and VAMN…KRTD. Residues 39–48 show a composition bias toward low complexity; it reads KSGGRNNNGR.

Belongs to the universal ribosomal protein uL2 family. In terms of assembly, part of the 50S ribosomal subunit. Forms a bridge to the 30S subunit in the 70S ribosome.

In terms of biological role, one of the primary rRNA binding proteins. Required for association of the 30S and 50S subunits to form the 70S ribosome, for tRNA binding and peptide bond formation. It has been suggested to have peptidyltransferase activity; this is somewhat controversial. Makes several contacts with the 16S rRNA in the 70S ribosome. This Alteromonas mediterranea (strain DSM 17117 / CIP 110805 / LMG 28347 / Deep ecotype) protein is Large ribosomal subunit protein uL2.